Reading from the N-terminus, the 359-residue chain is Guanine nucleotide-binding protein G(q) subunit alpha (359 aa).

S-palmitoyl cysteine attachment occurs at residues Cys9 and Cys10. In terms of domain architecture, G-alpha spans 38–359 (RELKLLLLGT…QLNLKEYNLV (322 aa)). Residues 41-54 (KLLLLGTGESGKST) are G1 motif. The GTP site is built by Ser50, Gly51, Lys52, Ser53, Thr54, Ser156, Leu180, Arg181, and Arg183. Ser53 is a binding site for Mg(2+). The tract at residues 178 to 186 (DVLRVRVPT) is G2 motif. A Mg(2+)-binding site is contributed by Thr186. The segment at 201–210 (FRMVDVGGQR) is G3 motif. At Gln209 the chain carries 5-glutamyl histamine. The segment at 270–277 (ILFLNKKD) is G4 motif. 4 residues coordinate GTP: Asn274, Lys275, Asp277, and Ala331. The segment at 329–334 (TCATDT) is G5 motif.

Belongs to the G-alpha family. G(q) subfamily. As to quaternary structure, g proteins are composed of 3 units; alpha, beta and gamma. The alpha chain contains the guanine nucleotide binding site. Interacts (GDP-bound form) with RIC8A (via C-terminus); promoting GNAQ folding and association with the plasma membrane. Binds NHERF1. Forms a complex with PECAM1 and BDKRB2. Interacts with GAS2L2. In terms of processing, palmitoylated by ZDHHC3 and ZDHHC7. Palmitoylation occurs in the Golgi and participates in the localization of GNAQ to the plasma membrane. Post-translationally, histaminylated at Gln-209 residues by TGM2.

It localises to the cell membrane. The protein resides in the golgi apparatus. Its subcellular location is the nucleus. The protein localises to the nucleus membrane. The catalysed reaction is GTP + H2O = GDP + phosphate + H(+). Functionally, guanine nucleotide-binding proteins (G proteins) function as transducers downstream of G protein-coupled receptors (GPCRs) in numerous signaling cascades. The alpha chain contains the guanine nucleotide binding site and alternates between an active, GTP-bound state and an inactive, GDP-bound state. Signaling by an activated GPCR promotes GDP release and GTP binding. The alpha subunit has a low GTPase activity that converts bound GTP to GDP, thereby terminating the signal. Both GDP release and GTP hydrolysis are modulated by numerous regulatory proteins. Signaling is mediated via phospholipase C-beta-dependent inositol lipid hydrolysis for signal propagation: activates phospholipase C-beta: following GPCR activation, GNAQ activates PLC-beta (PLCB1, PLCB2, PLCB3 or PLCB4), leading to production of diacylglycerol (DAG) and inositol 1,4,5-trisphosphate (IP3). Required for platelet activation. Regulates B-cell selection and survival and is required to prevent B-cell-dependent autoimmunity. Regulates chemotaxis of BM-derived neutrophils and dendritic cells (in vitro). Transduces FFAR4 signaling in response to long-chain fatty acids (LCFAs). Together with GNA11, required for heart development. In Rattus norvegicus (Rat), this protein is Guanine nucleotide-binding protein G(q) subunit alpha (Gnaq).